The following is a 294-amino-acid chain: Cytidine deaminase (294 aa).

CMP/dCMP-type deaminase domains are found at residues 48-168 (DEDA…FGPK) and 186-294 (LTGD…VLLG). 89 to 91 (NME) contacts substrate. A Zn(2+)-binding site is contributed by His102. Glu104 acts as the Proton donor in catalysis. 2 residues coordinate Zn(2+): Cys129 and Cys132.

It belongs to the cytidine and deoxycytidylate deaminase family. As to quaternary structure, homodimer. Requires Zn(2+) as cofactor.

The enzyme catalyses cytidine + H2O + H(+) = uridine + NH4(+). The catalysed reaction is 2'-deoxycytidine + H2O + H(+) = 2'-deoxyuridine + NH4(+). This enzyme scavenges exogenous and endogenous cytidine and 2'-deoxycytidine for UMP synthesis. In Salmonella choleraesuis (strain SC-B67), this protein is Cytidine deaminase.